The following is a 428-amino-acid chain: Adenylosuccinate synthetase (428 aa).

Residues 12–18 (GDEGKGK) and 40–42 (GHT) each bind GTP. Residue Asp-13 is the Proton acceptor of the active site. Mg(2+) contacts are provided by Asp-13 and Gly-40. IMP is bound by residues 13 to 16 (DEGK), 38 to 41 (NAGH), Thr-130, Arg-144, Gln-225, Thr-240, and Arg-304. His-41 functions as the Proton donor in the catalytic mechanism. 300 to 306 (VTTGRAR) is a substrate binding site. Residues Arg-306, 332-334 (KID), and 414-416 (SVG) each bind GTP.

Belongs to the adenylosuccinate synthetase family. As to quaternary structure, homodimer. The cofactor is Mg(2+).

The protein resides in the cytoplasm. The enzyme catalyses IMP + L-aspartate + GTP = N(6)-(1,2-dicarboxyethyl)-AMP + GDP + phosphate + 2 H(+). It participates in purine metabolism; AMP biosynthesis via de novo pathway; AMP from IMP: step 1/2. Functionally, plays an important role in the de novo pathway of purine nucleotide biosynthesis. Catalyzes the first committed step in the biosynthesis of AMP from IMP. In Clostridium botulinum (strain Loch Maree / Type A3), this protein is Adenylosuccinate synthetase.